The following is a 134-amino-acid chain: Small ribosomal subunit protein uS9 (134 aa).

The disordered stretch occupies residues 109–134 (DARRTEPHKPSKSSKGPRAKRQKSYR). A compositionally biased stretch (basic residues) spans 118–134 (PSKSSKGPRAKRQKSYR).

The protein belongs to the universal ribosomal protein uS9 family.

This chain is Small ribosomal subunit protein uS9, found in Methanococcus maripaludis (strain C5 / ATCC BAA-1333).